The primary structure comprises 420 residues: 3-phosphoshikimate 1-carboxyvinyltransferase (420 aa).

Lys20, Ser21, and Arg25 together coordinate 3-phosphoshikimate. Position 20 (Lys20) interacts with phosphoenolpyruvate. 2 residues coordinate phosphoenolpyruvate: Gly90 and Arg118. 3-phosphoshikimate is bound by residues Ser159, Ser160, Gln161, Ser187, Asp303, and Lys330. A phosphoenolpyruvate-binding site is contributed by Gln161. The Proton acceptor role is filled by Asp303. Residues Arg334, Arg376, and Lys402 each contribute to the phosphoenolpyruvate site.

Belongs to the EPSP synthase family. In terms of assembly, monomer.

Its subcellular location is the cytoplasm. The catalysed reaction is 3-phosphoshikimate + phosphoenolpyruvate = 5-O-(1-carboxyvinyl)-3-phosphoshikimate + phosphate. Its pathway is metabolic intermediate biosynthesis; chorismate biosynthesis; chorismate from D-erythrose 4-phosphate and phosphoenolpyruvate: step 6/7. Its function is as follows. Catalyzes the transfer of the enolpyruvyl moiety of phosphoenolpyruvate (PEP) to the 5-hydroxyl of shikimate-3-phosphate (S3P) to produce enolpyruvyl shikimate-3-phosphate and inorganic phosphate. The protein is 3-phosphoshikimate 1-carboxyvinyltransferase of Brachyspira hyodysenteriae (strain ATCC 49526 / WA1).